We begin with the raw amino-acid sequence, 258 residues long: Ribonuclease HII (258 aa).

In terms of domain architecture, RNase H type-2 spans 71 to 258; it reads ELIAGIDEVG…PIKSMVNFKY (188 aa). A divalent metal cation-binding residues include D77, E78, and D169.

It belongs to the RNase HII family. Requires Mn(2+) as cofactor. The cofactor is Mg(2+).

The protein resides in the cytoplasm. The catalysed reaction is Endonucleolytic cleavage to 5'-phosphomonoester.. Its function is as follows. Endonuclease that specifically degrades the RNA of RNA-DNA hybrids. The chain is Ribonuclease HII from Lactococcus lactis subsp. cremoris (strain SK11).